Here is a 277-residue protein sequence, read N- to C-terminus: Sulfur carrier protein FdhD (277 aa).

The Cysteine persulfide intermediate role is filled by C121. 260–265 (FCKPGR) contacts Mo-bis(molybdopterin guanine dinucleotide).

Belongs to the FdhD family.

Its subcellular location is the cytoplasm. Functionally, required for formate dehydrogenase (FDH) activity. Acts as a sulfur carrier protein that transfers sulfur from IscS to the molybdenum cofactor prior to its insertion into FDH. The protein is Sulfur carrier protein FdhD of Shigella dysenteriae serotype 1 (strain Sd197).